The sequence spans 147 residues: Neocarzinostatin (147 aa).

Residues 1-34 form the signal peptide; that stretch reads MVPISIIRNRVAKVAVGSAAVLGLAVGFQTPAVA. Disulfide bonds link Cys71-Cys81 and Cys122-Cys127.

The protein belongs to the neocarzinostatin family.

NCS has antibiotic activity (for Gram-positive bacteria) and antitumor activity (for certain mouse tumors). NCS binds non-covalently to a chromophore which is the cytotoxic and mutagenic component of the antibiotic. The chromophore binds to DNA as a weak intercalator and causes single- and double-strand breaks. This is Neocarzinostatin (ncsA) from Streptomyces carzinostaticus.